A 351-amino-acid polypeptide reads, in one-letter code: Sulfate/thiosulfate import ATP-binding protein CysA (351 aa).

The ABC transporter domain maps to 3–237 (ITVRNLHKRF…PRSAFVYEFL (235 aa)). Residue 35 to 42 (GPSGCGKT) participates in ATP binding.

It belongs to the ABC transporter superfamily. Sulfate/tungstate importer (TC 3.A.1.6) family. The complex is composed of two ATP-binding proteins (CysA), two transmembrane proteins (CysT and CysW) and a solute-binding protein (CysP).

The protein resides in the cell inner membrane. It carries out the reaction sulfate(out) + ATP + H2O = sulfate(in) + ADP + phosphate + H(+). The enzyme catalyses thiosulfate(out) + ATP + H2O = thiosulfate(in) + ADP + phosphate + H(+). Its function is as follows. Part of the ABC transporter complex CysAWTP involved in sulfate/thiosulfate import. Responsible for energy coupling to the transport system. The sequence is that of Sulfate/thiosulfate import ATP-binding protein CysA from Burkholderia mallei (strain ATCC 23344).